Consider the following 298-residue polypeptide: MAKKDEHLRKPEWLKIKLNTNENYTGLKKLMRENNLHTVCEEAKCPNIHECWAVRRTATFMILGSVCTRACRFCAVKTGLPTELDLQEPERVADSVALMNLKHAVITAVARDDQKDGGAGVFAETVRAIRRKSPFTTIEVLPSDMGGNYDNLKTLMDTRPDILNHNIETVRRLTPRVRARATYDRSLEFLRRAKEMQPDIPTKSSIMIGLGETKEEIIEVMDDLLANNVDIMAIGQYLQPSKKHLKVQKYYHPDEFAELKEIAMQKGFSHCEAGPLVRSSYHADEQVNEASKKRQAQA.

The [4Fe-4S] cluster site is built by C40, C45, C51, C67, C71, C74, and S280. Residues 53–269 enclose the Radical SAM core domain; it reads AVRRTATFMI…KEIAMQKGFS (217 aa).

Belongs to the radical SAM superfamily. Lipoyl synthase family. It depends on [4Fe-4S] cluster as a cofactor.

It localises to the cytoplasm. The enzyme catalyses [[Fe-S] cluster scaffold protein carrying a second [4Fe-4S](2+) cluster] + N(6)-octanoyl-L-lysyl-[protein] + 2 oxidized [2Fe-2S]-[ferredoxin] + 2 S-adenosyl-L-methionine + 4 H(+) = [[Fe-S] cluster scaffold protein] + N(6)-[(R)-dihydrolipoyl]-L-lysyl-[protein] + 4 Fe(3+) + 2 hydrogen sulfide + 2 5'-deoxyadenosine + 2 L-methionine + 2 reduced [2Fe-2S]-[ferredoxin]. It functions in the pathway protein modification; protein lipoylation via endogenous pathway; protein N(6)-(lipoyl)lysine from octanoyl-[acyl-carrier-protein]. Catalyzes the radical-mediated insertion of two sulfur atoms into the C-6 and C-8 positions of the octanoyl moiety bound to the lipoyl domains of lipoate-dependent enzymes, thereby converting the octanoylated domains into lipoylated derivatives. The polypeptide is Lipoyl synthase (Bacillus velezensis (strain DSM 23117 / BGSC 10A6 / LMG 26770 / FZB42) (Bacillus amyloliquefaciens subsp. plantarum)).